Reading from the N-terminus, the 689-residue chain is Transcription factor BHLH42 (689 aa).

Disordered regions lie at residues 192–287 (IDHH…NPRV) and 458–489 (DDNN…ANHV). Polar residues predominate over residues 206 to 217 (EHSTSNLATSSV). Over residues 246–271 (EEQEQEQEEDEDDDDDDDDEEEAESD) the composition is skewed to acidic residues. Positions 483 to 496 (ELSANHVLAERRRR) are basic motif. The 50-residue stretch at 483–532 (ELSANHVLAERRRREKLNERFIILRSLVPFVTKMDKASILGDTIEYVKQL) folds into the bHLH domain. Positions 497-532 (EKLNERFIILRSLVPFVTKMDKASILGDTIEYVKQL) are helix-loop-helix motif. Positions 547–570 (EIDQRSRSSGDPQRSGAKAATDKR) are disordered.

The protein belongs to the bHLH protein family. Interacts with MYB123. As to expression, expressed in the inner pericarp of maturing fruits.

Its subcellular location is the nucleus. In terms of biological role, transcription activator involved in the spatiotemporal regulation of anthocyanin biosynthesis specifically in the inner pericarp of red-fleshed kiwifruits. Functions in association with MYB123 to activate the promoters of LDOX (ANS) and F3GT1 that encode the dedicated enzymes for anthocyanin biosynthesis. This Actinidia chinensis var. chinensis (Chinese soft-hair kiwi) protein is Transcription factor BHLH42.